A 1577-amino-acid polypeptide reads, in one-letter code: Hemolysin (1577 aa).

The signal sequence occupies residues 1-29 (MKSKNFKLSPSGRLAASLAIIFVSLNAYG). A compositionally biased stretch (basic and acidic residues) spans 437–446 (EKESRSENGN). Disordered regions lie at residues 437–467 (EKES…QTET), 1081–1103 (TDTH…GTTP), 1169–1188 (QSAS…GVQA), and 1213–1232 (KQDE…SGNL). 3 stretches are compositionally biased toward polar residues: residues 454-467 (LESG…QTET), 1081-1095 (TDTH…NGSA), and 1169-1184 (QSAS…NLSG).

It is found in the cell outer membrane. Bacterial hemolysins are exotoxins that attack blood cell membranes and cause cell rupture by mechanisms not clearly defined. Its function is as follows. Cell-bound hemolysin, which releases heme-iron from erythrocytes by interaction with the erythrocyte membrane. HpmA requires HpmB function. In Proteus mirabilis, this protein is Hemolysin (hpmA).